We begin with the raw amino-acid sequence, 205 residues long: Arginine exporter protein ArgO (205 aa).

The next 6 helical transmembrane spans lie at 1–21 (MLAVFLQGFALSAAMILPLGP), 42–62 (LCALSDIILICAGIFGGSALL), 67–87 (LLLALVTWGGVAFLLWYGWGA), 111–131 (IIVTLLAVTWLNPHVYLDTFV), 147–167 (WFAFGAVSASVAWFFALALLA), and 182–202 (VINLLVGGVMWFIAFQLARQG).

This sequence belongs to the LysE/ArgO transporter (TC 2.A.75) family.

Its subcellular location is the cell inner membrane. It catalyses the reaction L-arginine(in) = L-arginine(out). In terms of biological role, involved in the export of arginine. Important to control the intracellular level of arginine and the correct balance between arginine and lysine. This is Arginine exporter protein ArgO from Yersinia enterocolitica serotype O:8 / biotype 1B (strain NCTC 13174 / 8081).